Reading from the N-terminus, the 362-residue chain is MSNIIVELKHVGKRYGDTQVLKDINIEIEQGKFYTLLGPSGSGKTTILRAIAGFLDVSEGEVLFDGKRINDVPANQRKVNTVFQDYALFPHLNVFDNVAFGLRLHRMSKQDIQTKVEDALKMVRLQGYADREISELSGGQQQRVAIARAIVLEPQVLLLDEPLSALDAKLRKDMQYELRELQERLGITFLFVTHDQEEALALSDEIFVMNDGEVQQSGTPVDIYDEPVNHFVADFIGESNIIQGHMIKDFLVEFNGKRFECADAGMRPNEPVEVVLRPEDLDITPANSGKVNVEVDTQLFRGDYYEIVGYDDLKNEWLIHSTNPAKDGETVGLTFDPEDIHVMRLNESEEDFDARLETYEGE.

One can recognise an ABC transporter domain in the interval 6 to 236 (VELKHVGKRY…PVNHFVADFI (231 aa)). An ATP-binding site is contributed by 38–45 (GPSGSGKT).

This sequence belongs to the ABC transporter superfamily. Spermidine/putrescine importer (TC 3.A.1.11.1) family. In terms of assembly, the complex is composed of two ATP-binding proteins (PotA), two transmembrane proteins (PotB and PotC) and a solute-binding protein (PotD).

It is found in the cell membrane. It carries out the reaction ATP + H2O + polyamine-[polyamine-binding protein]Side 1 = ADP + phosphate + polyamineSide 2 + [polyamine-binding protein]Side 1.. In terms of biological role, part of the ABC transporter complex PotABCD involved in spermidine/putrescine import. Responsible for energy coupling to the transport system. This is Spermidine/putrescine import ATP-binding protein PotA from Lacticaseibacillus paracasei (strain ATCC 334 / BCRC 17002 / CCUG 31169 / CIP 107868 / KCTC 3260 / NRRL B-441) (Lactobacillus paracasei).